We begin with the raw amino-acid sequence, 397 residues long: Riboflavin biosynthesis protein RibBA (397 aa).

Residues 1–199 (MFHRIEEALE…IEDLIAYRRH (199 aa)) are DHBP synthase. Residues 26-27 (RE), Asp31, 138-142 (RAGHT), and Glu162 each bind D-ribulose 5-phosphate. Position 27 (Glu27) interacts with Mg(2+). His141 is a Mg(2+) binding site. Residues 200–397 (HETLVTREAE…VNKLGHLLNL (198 aa)) form a GTP cyclohydrolase II region. Position 250–254 (250–254 (RVHSE)) interacts with GTP. The Zn(2+) site is built by Cys255, Cys266, and Cys268. GTP contacts are provided by residues Gln271, 293–295 (EGR), and Thr315. Asp327 acts as the Proton acceptor; for GTP cyclohydrolase activity in catalysis. Arg329 (nucleophile; for GTP cyclohydrolase activity) is an active-site residue. GTP-binding residues include Thr350 and Lys355.

In the N-terminal section; belongs to the DHBP synthase family. This sequence in the C-terminal section; belongs to the GTP cyclohydrolase II family. Mg(2+) is required as a cofactor. It depends on Mn(2+) as a cofactor. Zn(2+) serves as cofactor.

The enzyme catalyses D-ribulose 5-phosphate = (2S)-2-hydroxy-3-oxobutyl phosphate + formate + H(+). It catalyses the reaction GTP + 4 H2O = 2,5-diamino-6-hydroxy-4-(5-phosphoribosylamino)-pyrimidine + formate + 2 phosphate + 3 H(+). It participates in cofactor biosynthesis; riboflavin biosynthesis; 2-hydroxy-3-oxobutyl phosphate from D-ribulose 5-phosphate: step 1/1. The protein operates within cofactor biosynthesis; riboflavin biosynthesis; 5-amino-6-(D-ribitylamino)uracil from GTP: step 1/4. Catalyzes the conversion of D-ribulose 5-phosphate to formate and 3,4-dihydroxy-2-butanone 4-phosphate. Functionally, catalyzes the conversion of GTP to 2,5-diamino-6-ribosylamino-4(3H)-pyrimidinone 5'-phosphate (DARP), formate and pyrophosphate. The polypeptide is Riboflavin biosynthesis protein RibBA (Bacillus cereus (strain ATCC 14579 / DSM 31 / CCUG 7414 / JCM 2152 / NBRC 15305 / NCIMB 9373 / NCTC 2599 / NRRL B-3711)).